A 334-amino-acid polypeptide reads, in one-letter code: tRNA U34 carboxymethyltransferase (334 aa).

Carboxy-S-adenosyl-L-methionine-binding positions include lysine 91, tryptophan 105, lysine 110, glycine 130, 152–154, 181–182, methionine 196, tyrosine 200, and arginine 315; these read DPT and IE.

This sequence belongs to the class I-like SAM-binding methyltransferase superfamily. CmoB family. Homotetramer.

It catalyses the reaction carboxy-S-adenosyl-L-methionine + 5-hydroxyuridine(34) in tRNA = 5-carboxymethoxyuridine(34) in tRNA + S-adenosyl-L-homocysteine + H(+). Catalyzes carboxymethyl transfer from carboxy-S-adenosyl-L-methionine (Cx-SAM) to 5-hydroxyuridine (ho5U) to form 5-carboxymethoxyuridine (cmo5U) at position 34 in tRNAs. This chain is tRNA U34 carboxymethyltransferase, found in Klebsiella pneumoniae subsp. pneumoniae (strain ATCC 700721 / MGH 78578).